Here is a 1492-residue protein sequence, read N- to C-terminus: ATP-binding cassette sub-family C member 10 (1492 aa).

A run of 9 helical transmembrane segments spans residues 32 to 52 (LVLS…YLGT), 70 to 90 (LAAS…VALP), 102 to 122 (VLAG…LWVL), 133 to 153 (PLAL…TVLW), 172 to 192 (LCLL…WAAP), 293 to 313 (LVGT…VGFL), 320 to 340 (LSHG…GAVL), 391 to 411 (LLNF…LAIT), and 414 to 434 (LLYQ…LLLV). The ABC transmembrane type-1 1 domain occupies 285–563 (YLALGLLKLV…FPWVINGLLE (279 aa)). Threonine 463 carries the phosphothreonine modification. Serine 467 bears the Phosphoserine mark. Helical transmembrane passes span 507–527 (VYLW…TYVL) and 538–558 (FTAL…PWVI). The 227-residue stretch at 598–824 (LELHGALFSW…VQAVPKAWAE (227 aa)) folds into the ABC transporter 1 domain. 633–640 (GKVGCGKS) contributes to the ATP binding site. A disordered region spans residues 825–860 (NGQESDSATAQSVQNPEKTKEGLEEEQSTSGRLLQE). Over residues 826–840 (GQESDSATAQSVQNP) the composition is skewed to polar residues. Transmembrane regions (helical) follow at residues 875-895 (AYWK…LLLM), 933-953 (LFSP…VFPL), 974-994 (IAGV…AGTL), 1051-1071 (AGLL…LLLL), 1153-1173 (IRLQ…ALVQ), and 1182-1202 (GLVG…SGLV). An ABC transmembrane type-1 2 domain is found at 885-1210 (ALAILFSLLL…LVSSFTQTEA (326 aa)). Positions 1246-1479 (VEFQDVVLAY…PHSLFQQLLQ (234 aa)) constitute an ABC transporter 2 domain. 1280–1287 (GRTGSGKS) serves as a coordination point for ATP.

The protein belongs to the ABC transporter superfamily. ABCC family. Conjugate transporter (TC 3.A.1.208) subfamily. As to expression, in testis, localized to peritubular myoid cells, Leydig cells, along the basal membrane of Sertoli cells, moderately in the adluminal compartment of the seminiferous tubules, and in vascular endothelial cells. In terms of tissue distribution, specifically expressed in spleen. Widely expressed.

It localises to the cell membrane. The protein resides in the basolateral cell membrane. Its subcellular location is the basal cell membrane. It carries out the reaction ATP + H2O + xenobioticSide 1 = ADP + phosphate + xenobioticSide 2.. The catalysed reaction is an S-substituted glutathione(in) + ATP + H2O = an S-substituted glutathione(out) + ADP + phosphate + H(+). It catalyses the reaction 17beta-estradiol 17-O-(beta-D-glucuronate)(in) + ATP + H2O = 17beta-estradiol 17-O-(beta-D-glucuronate)(out) + ADP + phosphate + H(+). The enzyme catalyses leukotriene C4(in) + ATP + H2O = leukotriene C4(out) + ADP + phosphate + H(+). ATP-dependent transporter of the ATP-binding cassette (ABC) family that actively extrudes physiological compounds, and xenobiotics from cells. Lipophilic anion transporter that mediates ATP-dependent transport of glucuronide conjugates such as estradiol-17-beta-o-glucuronide and GSH conjugates such as leukotriene C4 (LTC4). May contribute to regulate the transport of organic compounds in testes across the blood-testis-barrier. Mediates multidrug resistance (MDR) in cancer cells by preventing the intracellular accumulation of certain antitumor drugs, such as, docetaxel and paclitaxel. Does not transport glycocholic acid, taurocholic acid, MTX, folic acid, cAMP, or cGMP. This chain is ATP-binding cassette sub-family C member 10 (ABCC10), found in Homo sapiens (Human).